We begin with the raw amino-acid sequence, 94 residues long: Small ribosomal subunit protein uS19 (94 aa).

This sequence belongs to the universal ribosomal protein uS19 family.

Its function is as follows. Protein S19 forms a complex with S13 that binds strongly to the 16S ribosomal RNA. This is Small ribosomal subunit protein uS19 from Acidobacterium capsulatum (strain ATCC 51196 / DSM 11244 / BCRC 80197 / JCM 7670 / NBRC 15755 / NCIMB 13165 / 161).